A 168-amino-acid polypeptide reads, in one-letter code: CASP-like protein UU-1 (168 aa).

The Cytoplasmic segment spans residues 1 to 17 (MVELESQEAVTVASTAD). Residues 18–38 (IAVDVSLRLLAAATSLAAAVV) form a helical membrane-spanning segment. At 39–54 (VAANHQQRWGIRVDFT) the chain is on the extracellular side. The helical transmembrane segment at 55-75 (LFQVWIGFVAVNLVCTVYAAA) threads the bilayer. At 76–95 (TAAAAARKAMGRWWLHHADA) the chain is on the cytoplasmic side. The helical transmembrane segment at 96 to 116 (VVVNLEAAATAGAGAIGSIAM) threads the bilayer. The Extracellular segment spans residues 117–136 (WGNEASGWYAVCRLYRRYCN). Residues 137 to 157 (AGAAALALSLAAVLLLGVACA) form a helical membrane-spanning segment. Residues 158-168 (RSRYPKMPPTT) lie on the Cytoplasmic side of the membrane.

This sequence belongs to the Casparian strip membrane proteins (CASP) family. Homodimer and heterodimers.

It localises to the cell membrane. In Oryza sativa subsp. japonica (Rice), this protein is CASP-like protein UU-1.